The sequence spans 309 residues: Protein FdhE (309 aa).

This sequence belongs to the FdhE family.

The protein resides in the cytoplasm. Necessary for formate dehydrogenase activity. The chain is Protein FdhE from Salmonella typhimurium (strain LT2 / SGSC1412 / ATCC 700720).